The following is an 82-amino-acid chain: MENDAGQVTELYIPRKCSATNRMITSKDHASVQLNIGHLDANGLYTGQFTTFALCGFVRAQGDADSGVDRLWQKKKVEAKQQ.

At Met1 the chain carries N-acetylmethionine.

This sequence belongs to the eukaryotic ribosomal protein eS21 family.

The chain is Small ribosomal subunit protein eS21z (RPS21B) from Arabidopsis thaliana (Mouse-ear cress).